The chain runs to 144 residues: Cornifin-A (144 aa).

Residues 1–41 form a disordered region; the sequence is MSSHQQKQPCTVPPQLHQQQVKQPCQPPPQEPCAPKTKDPC. Over residues 13–24 the composition is skewed to low complexity; the sequence is PPQLHQQQVKQP. Repeat copies occupy residues 27 to 34, 35 to 42, 43 to 49, 50 to 57, 58 to 65, 66 to 73, 74 to 81, 82 to 89, 90 to 97, 98 to 105, 106 to 113, 114 to 121, and 122 to 129. The tract at residues 27 to 129 is 13 X 8 AA approximate tandem repeats; that stretch reads PPPQEPCAPK…CHPVVPEPCP (103 aa).

The protein belongs to the cornifin (SPRR) family. In terms of tissue distribution, expressed in fetal periderm, hair follicles and in the thickened epidermis of the lip and footpad. Also present in the epithelia of various tissues such as the penis, vagina, forestomach, tongue and esophagus.

The protein localises to the cytoplasm. In terms of biological role, cross-linked envelope protein of keratinocytes. It is a keratinocyte protein that first appears in the cell cytosol, but ultimately becomes cross-linked to membrane proteins by transglutaminase. All that results in the formation of an insoluble envelope beneath the plasma membrane. May participate widely in the construction of cell envelopes in cornifying epithelia characterized by either increased thickness or a requirement for extreme flexibility. The polypeptide is Cornifin-A (Sprr1a) (Mus musculus (Mouse)).